Reading from the N-terminus, the 356-residue chain is Tricetin 3',4',5'-O-trimethyltransferase (356 aa).

123-129 (MNQDKVL) contributes to the substrate binding site. The segment at 155 to 173 (AFEYHGTDPRFNRVFNEGM) is substrate binding. Positions 201, 224, 244, 245, and 258 each coordinate S-adenosyl-L-methionine. Residue H262 is the Proton acceptor of the active site.

It belongs to the class I-like SAM-binding methyltransferase superfamily. Cation-independent O-methyltransferase family. COMT subfamily. Homodimer. The monomer is fully active and dimerization is not required for sequential methylation. As to expression, expressed in roots, stems and leaves.

It carries out the reaction tricetin + 3 S-adenosyl-L-methionine = 3',4',5'-O-trimethyltricetin + 3 S-adenosyl-L-homocysteine + 3 H(+). Functionally, flavonoid B-ring-specific O-methyltransferase with a preference for flavones &gt; dihydroflavones &gt; flavonols that possess at least two B-ring hydroxyl groups. Active with tricetin, 5-hydroxyferulic acid, luteolin, quercitin, eriodictyol, quercetagetin, taxifolin, gossypetin and myricetin. No activity with naringenin, apigenin, kaempferol, 7,8-dihydroxy- or 5,7,8-trihydroxy flavones, chlorogenic acid, gallic acid or daphnetin. Catalyzes the sequential O-methylation of tricetin via 3'-O-methyltricetin, 3',5'-O-methyltricetin to 3',4',5'-O-trimethyltricetin. May also be involved in S lignin biosynthesis. The chain is Tricetin 3',4',5'-O-trimethyltransferase (OMT2) from Triticum aestivum (Wheat).